We begin with the raw amino-acid sequence, 115 residues long: Nitrogenase-stabilizing/protective protein NifW (115 aa).

Belongs to the NifW family. As to quaternary structure, homotrimer; associates with NifD.

In terms of biological role, may protect the nitrogenase Fe-Mo protein from oxidative damage. The chain is Nitrogenase-stabilizing/protective protein NifW from Azotobacter vinelandii (strain DJ / ATCC BAA-1303).